The sequence spans 88 residues: YcgL domain-containing protein NTHI1684 (88 aa).

One can recognise a YcgL domain in the interval methionine 1 to serine 85.

The protein is YcgL domain-containing protein NTHI1684 of Haemophilus influenzae (strain 86-028NP).